The sequence spans 469 residues: 2-amino-4-ketopentanoate thiolase beta subunit (469 aa).

An N6-(pyridoxal phosphate)lysine modification is found at Lys102. Pyridoxal 5'-phosphate contacts are provided by residues Asn128 and 238–242; that span reads AGGGN.

This sequence belongs to the threonine synthase family. In terms of assembly, heterodimer with OrtA. Requires pyridoxal 5'-phosphate as cofactor.

The enzyme catalyses D-alanine + acetyl-CoA = (2R)-2-amino-4-oxopentanoate + CoA. With respect to regulation, completely inhibited by p-chloromercuribenzoate (p-ClHgBzO) and acetyl-CoA, and partially inhibited by N-ethylmaleimide. Involved in the ornithine fermentation pathway. Catalyzes the thiolytic cleavage of 2-amino-4-ketopentanoate (AKP) with coenzyme A (CoA) to form acetyl-CoA and alanine. It is strictly specific for AKP. This Acetoanaerobium sticklandii (strain ATCC 12662 / DSM 519 / JCM 1433 / CCUG 9281 / NCIMB 10654 / HF) (Clostridium sticklandii) protein is 2-amino-4-ketopentanoate thiolase beta subunit.